The following is a 178-amino-acid chain: Large ribosomal subunit protein uL5 (178 aa).

Ala-2 is subject to N-acetylalanine. Lys-38 is covalently cross-linked (Glycyl lysine isopeptide (Lys-Gly) (interchain with G-Cter in SUMO2)). Residues Thr-44 and Thr-47 each carry the phosphothreonine modification. Lys-52 carries the post-translational modification N6-acetyllysine; alternate. Residue Lys-52 forms a Glycyl lysine isopeptide (Lys-Gly) (interchain with G-Cter in SUMO2); alternate linkage. Lys-85 carries the post-translational modification N6-acetyllysine. Lys-154 is covalently cross-linked (Glycyl lysine isopeptide (Lys-Gly) (interchain with G-Cter in SUMO2)).

It belongs to the universal ribosomal protein uL5 family. Component of the large ribosomal subunit (LSU). Part of the 5S RNP complex, which is a LSU subcomplex composed of the 5S RNA, RPL5 and RPL11. Component of a hexameric 5S RNP precursor complex, composed of 5S RNA, RRS1, RPF2/BXDC1, RPL5, RPL11 and HEATR3; this complex acts as a precursor for ribosome assembly. Interacts with PML. Interacts with MDM2 (via its RanBP2-type zinc finger domain); negatively regulates MDM2-mediated TP53 ubiquitination and degradation. Interacts with NOP53; retains RPL11 into the nucleolus.

It localises to the nucleus. The protein resides in the nucleolus. Its subcellular location is the cytoplasm. In terms of biological role, component of the ribosome, a large ribonucleoprotein complex responsible for the synthesis of proteins in the cell. The small ribosomal subunit (SSU) binds messenger RNAs (mRNAs) and translates the encoded message by selecting cognate aminoacyl-transfer RNA (tRNA) molecules. The large subunit (LSU) contains the ribosomal catalytic site termed the peptidyl transferase center (PTC), which catalyzes the formation of peptide bonds, thereby polymerizing the amino acids delivered by tRNAs into a polypeptide chain. The nascent polypeptides leave the ribosome through a tunnel in the LSU and interact with protein factors that function in enzymatic processing, targeting, and the membrane insertion of nascent chains at the exit of the ribosomal tunnel. As part of the 5S RNP/5S ribonucleoprotein particle it is an essential component of the LSU, required for its formation and the maturation of rRNAs. It also couples ribosome biogenesis to p53/TP53 activation. As part of the 5S RNP it accumulates in the nucleoplasm and inhibits MDM2, when ribosome biogenesis is perturbed, mediating the stabilization and the activation of TP53. Promotes nucleolar location of PML. The sequence is that of Large ribosomal subunit protein uL5 (RPL11) from Pongo abelii (Sumatran orangutan).